Reading from the N-terminus, the 70-residue chain is Putative membrane protein insertion efficiency factor (70 aa).

The protein belongs to the UPF0161 family.

The protein resides in the cell inner membrane. Could be involved in insertion of integral membrane proteins into the membrane. The sequence is that of Putative membrane protein insertion efficiency factor from Geobacter sp. (strain M21).